Reading from the N-terminus, the 35-residue chain is Kappa-theraphotoxin-Tb1c (35 aa).

3 cysteine pairs are disulfide-bonded: Cys-3–Cys-18, Cys-10–Cys-23, and Cys-17–Cys-30.

This sequence belongs to the neurotoxin 10 (Hwtx-1) family. 59 (Tltx) subfamily. Monomer. In terms of tissue distribution, expressed by the venom gland.

It localises to the secreted. Functionally, blocks Kv4.2/KCND2 voltage-gated potassium channels probably by shifting the voltage-dependence of channel activation to more depolarized potentials and by binding to the S3-S4 linker region of the voltage sensor domain. In Theraphosa blondi (Goliath birdeating spider), this protein is Kappa-theraphotoxin-Tb1c.